A 187-amino-acid polypeptide reads, in one-letter code: MSTFPVLAEDIPLRERHVKGRVDPHFRAPKMEMFQRLLLLLLLSMGGTWASKEPLRPRCRPINATLAVEKEGCPVCITVNTTICAGYCPTMTRVLQGVLPALPQVVCNYRDVRFESIRLPGCPRGVNPVVSYAVALSCQCALCRRSTTDCGGPKDHPLTCDDPRFQDSSSSKAPPPSLPSPSRLPGP.

The N-terminal stretch at 1-50 (MSTFPVLAEDIPLRERHVKGRVDPHFRAPKMEMFQRLLLLLLLSMGGTWA) is a signal peptide. Intrachain disulfides connect Cys-59–Cys-107, Cys-73–Cys-122, Cys-76–Cys-160, Cys-84–Cys-138, Cys-88–Cys-140, and Cys-143–Cys-150. Asn-63 and Asn-80 each carry an N-linked (GlcNAc...) asparagine glycan. Residues 161 to 187 (DDPRFQDSSSSKAPPPSLPSPSRLPGP) are disordered. Over residues 173–187 (APPPSLPSPSRLPGP) the composition is skewed to pro residues.

It belongs to the glycoprotein hormones subunit beta family. In terms of tissue distribution, expressed in placenta, testis and pituitary.

The protein localises to the secreted. The chain is Choriogonadotropin subunit beta variant 1 (CGB1) from Homo sapiens (Human).